The sequence spans 392 residues: Phosphoglycerate kinase (392 aa).

Substrate contacts are provided by residues 21–23 (DFN), Arg-36, 59–62 (HLGR), Arg-117, and Arg-150. Residues Lys-200, Gly-288, Glu-319, and 345–348 (GGDS) each bind ATP.

It belongs to the phosphoglycerate kinase family. Monomer.

Its subcellular location is the cytoplasm. It catalyses the reaction (2R)-3-phosphoglycerate + ATP = (2R)-3-phospho-glyceroyl phosphate + ADP. It functions in the pathway carbohydrate degradation; glycolysis; pyruvate from D-glyceraldehyde 3-phosphate: step 2/5. This chain is Phosphoglycerate kinase, found in Rubrobacter xylanophilus (strain DSM 9941 / JCM 11954 / NBRC 16129 / PRD-1).